The primary structure comprises 772 residues: 5-methyltetrahydropteroyltriglutamate--homocysteine methyltransferase (772 aa).

5-methyltetrahydropteroyltri-L-glutamate contacts are provided by residues 24-27 (RELK) and lysine 120. The tract at residues 404–428 (DPAVRSRTAATTDADARRSGPYPER) is disordered. Residues 446–448 (IGS) and glutamate 499 each bind L-homocysteine. Residues 446-448 (IGS) and glutamate 499 contribute to the L-methionine site. Residue tryptophan 576 participates in 5-methyltetrahydropteroyltri-L-glutamate binding. An L-homocysteine-binding site is contributed by aspartate 614. Aspartate 614 is a binding site for L-methionine. Glutamate 620 serves as a coordination point for 5-methyltetrahydropteroyltri-L-glutamate. Zn(2+) contacts are provided by histidine 656, cysteine 658, and glutamate 680. The Proton donor role is filled by histidine 709. Cysteine 741 serves as a coordination point for Zn(2+).

Belongs to the vitamin-B12 independent methionine synthase family. The cofactor is Zn(2+).

It carries out the reaction 5-methyltetrahydropteroyltri-L-glutamate + L-homocysteine = tetrahydropteroyltri-L-glutamate + L-methionine. It functions in the pathway amino-acid biosynthesis; L-methionine biosynthesis via de novo pathway; L-methionine from L-homocysteine (MetE route): step 1/1. Functionally, catalyzes the transfer of a methyl group from 5-methyltetrahydrofolate to homocysteine resulting in methionine formation. This Streptomyces avermitilis (strain ATCC 31267 / DSM 46492 / JCM 5070 / NBRC 14893 / NCIMB 12804 / NRRL 8165 / MA-4680) protein is 5-methyltetrahydropteroyltriglutamate--homocysteine methyltransferase.